The primary structure comprises 238 residues: Dolichyldiphosphatase 1 (238 aa).

4 helical membrane passes run 33-53 (LAYL…LIIF), 100-120 (PSSH…FLYL), 130-150 (FLDL…AFLV), and 162-182 (WSQV…WFIF).

Belongs to the dolichyldiphosphatase family.

It localises to the endoplasmic reticulum membrane. The enzyme catalyses a di-trans,poly-cis-dolichyl diphosphate + H2O = a di-trans,poly-cis-dolichyl phosphate + phosphate + H(+). Its pathway is protein modification; protein glycosylation. Required for efficient N-glycosylation. Necessary for maintaining optimal levels of dolichol-linked oligosaccharides. Hydrolyzes dolichyl pyrophosphate at a very high rate and dolichyl monophosphate at a much lower rate. Does not act on phosphatidate. In Homo sapiens (Human), this protein is Dolichyldiphosphatase 1 (DOLPP1).